Reading from the N-terminus, the 84-residue chain is Cell division topological specificity factor (84 aa).

This sequence belongs to the MinE family.

In terms of biological role, prevents the cell division inhibition by proteins MinC and MinD at internal division sites while permitting inhibition at polar sites. This ensures cell division at the proper site by restricting the formation of a division septum at the midpoint of the long axis of the cell. This Pseudomonas putida (strain ATCC 700007 / DSM 6899 / JCM 31910 / BCRC 17059 / LMG 24140 / F1) protein is Cell division topological specificity factor.